A 228-amino-acid chain; its full sequence is Small ribosomal subunit protein uS3 (228 aa).

Residues 39–107 (VREFIRERLK…PVHINIEEIR (69 aa)) enclose the KH type-2 domain.

Belongs to the universal ribosomal protein uS3 family. As to quaternary structure, part of the 30S ribosomal subunit. Forms a tight complex with proteins S10 and S14.

In terms of biological role, binds the lower part of the 30S subunit head. Binds mRNA in the 70S ribosome, positioning it for translation. The chain is Small ribosomal subunit protein uS3 from Halorhodospira halophila (strain DSM 244 / SL1) (Ectothiorhodospira halophila (strain DSM 244 / SL1)).